Consider the following 296-residue polypeptide: 4-hydroxy-tetrahydrodipicolinate synthase (296 aa).

A pyruvate-binding site is contributed by Thr49. Catalysis depends on Tyr137, which acts as the Proton donor/acceptor. The Schiff-base intermediate with substrate role is filled by Lys166. Ile208 provides a ligand contact to pyruvate.

The protein belongs to the DapA family. Homotetramer; dimer of dimers.

Its subcellular location is the cytoplasm. It catalyses the reaction L-aspartate 4-semialdehyde + pyruvate = (2S,4S)-4-hydroxy-2,3,4,5-tetrahydrodipicolinate + H2O + H(+). It participates in amino-acid biosynthesis; L-lysine biosynthesis via DAP pathway; (S)-tetrahydrodipicolinate from L-aspartate: step 3/4. Catalyzes the condensation of (S)-aspartate-beta-semialdehyde [(S)-ASA] and pyruvate to 4-hydroxy-tetrahydrodipicolinate (HTPA). In Chlorobium phaeobacteroides (strain DSM 266 / SMG 266 / 2430), this protein is 4-hydroxy-tetrahydrodipicolinate synthase.